The chain runs to 160 residues: Sperm acrosome-associated protein 5 (160 aa).

Residues 1-21 form the signal peptide; it reads MKVCSIVVVILAVLLIAKLDA. Residues 22 to 150 form the C-type lysozyme domain; sequence KIYERCELAK…SEWLKGCSVR (129 aa). Intrachain disulfides connect Cys27–Cys147, Cys51–Cys135, Cys85–Cys100, and Cys96–Cys114. Residue Glu56 is part of the active site.

The protein belongs to the glycosyl hydrolase 22 family.

It is found in the secreted. The catalysed reaction is Hydrolysis of (1-&gt;4)-beta-linkages between N-acetylmuramic acid and N-acetyl-D-glucosamine residues in a peptidoglycan and between N-acetyl-D-glucosamine residues in chitodextrins.. In Mus musculus (Mouse), this protein is Sperm acrosome-associated protein 5 (Spaca5).